Consider the following 426-residue polypeptide: Glutamate-1-semialdehyde 2,1-aminomutase (426 aa).

The residue at position 265 (lysine 265) is an N6-(pyridoxal phosphate)lysine.

Belongs to the class-III pyridoxal-phosphate-dependent aminotransferase family. HemL subfamily. Homodimer. Requires pyridoxal 5'-phosphate as cofactor.

It localises to the cytoplasm. The catalysed reaction is (S)-4-amino-5-oxopentanoate = 5-aminolevulinate. It functions in the pathway porphyrin-containing compound metabolism; protoporphyrin-IX biosynthesis; 5-aminolevulinate from L-glutamyl-tRNA(Glu): step 2/2. The polypeptide is Glutamate-1-semialdehyde 2,1-aminomutase (Actinobacillus pleuropneumoniae serotype 3 (strain JL03)).